The sequence spans 172 residues: MARFTVLITAVVLAFLMAAPMPGVTAKKYTVGENKFWNPNINYTIWAQGKHFYLGDWLYFVFDRNQHNILEVNKTDYEGCIADHPIRNWTRGAGRDIVTLNQTKHYYLLDGKGGCYGGMKLSVKVEKLPPPPKSAPVKNIGSVSMVTGLAQFMIPVSLFAFPAMWDVISRMW.

The signal sequence occupies residues 1–26; the sequence is MARFTVLITAVVLAFLMAAPMPGVTA. A Phytocyanin domain is found at 27–127; the sequence is KKYTVGENKF…GMKLSVKVEK (101 aa). Residues asparagine 42, asparagine 73, asparagine 88, and asparagine 101 are each glycosylated (N-linked (GlcNAc...) asparagine). Cysteines 80 and 115 form a disulfide. Glycine 141 carries the GPI-anchor amidated glycine lipid modification. Positions 142 to 172 are cleaved as a propeptide — removed in mature form; that stretch reads SVSMVTGLAQFMIPVSLFAFPAMWDVISRMW.

It belongs to the early nodulin-like (ENODL) family.

Its subcellular location is the cell membrane. Functionally, may act as a carbohydrate transporter. This is Early nodulin-like protein 17 from Arabidopsis thaliana (Mouse-ear cress).